The primary structure comprises 1159 residues: ATP-dependent helicase/deoxyribonuclease subunit B (1159 aa).

The UvrD-like helicase ATP-binding domain occupies 1–401 (MSIRFVYGRS…LLKNWSYESV (401 aa)). 8 to 15 (GRSGTGKS) serves as a coordination point for ATP. The UvrD-like helicase C-terminal domain occupies 279 to 582 (PYRFKGNLEL…NIGDIARIKG (304 aa)). [4Fe-4S] cluster-binding residues include Cys-787, Cys-1106, Cys-1109, and Cys-1115.

This sequence belongs to the helicase family. AddB/RexB type 1 subfamily. As to quaternary structure, heterodimer of AddA and AddB. It depends on Mg(2+) as a cofactor. The cofactor is [4Fe-4S] cluster.

Functionally, the heterodimer acts as both an ATP-dependent DNA helicase and an ATP-dependent, dual-direction single-stranded exonuclease. Recognizes the chi site generating a DNA molecule suitable for the initiation of homologous recombination. The AddB subunit has 5' -&gt; 3' nuclease activity but not helicase activity. In Clostridium beijerinckii (strain ATCC 51743 / NCIMB 8052) (Clostridium acetobutylicum), this protein is ATP-dependent helicase/deoxyribonuclease subunit B.